A 270-amino-acid polypeptide reads, in one-letter code: uncharacterized protein (270 aa).

Positions Arg166–Phe186 are disordered.

This is an uncharacterized protein from Ostreid herpesvirus 1 (isolate France) (OsHV-1).